Consider the following 451-residue polypeptide: 3-carboxy-cis,cis-muconate cycloisomerase (451 aa).

The protein belongs to the class-II fumarase/aspartase family. As to quaternary structure, homotetramer.

It catalyses the reaction 2-(carboxymethyl)-5-oxo-2,5-dihydro-2-furoate = 3-carboxy-cis,cis-muconate + H(+). It functions in the pathway aromatic compound metabolism; beta-ketoadipate pathway; 5-oxo-4,5-dihydro-2-furylacetate from 3-carboxy-cis,cis-muconate: step 1/2. In terms of biological role, catalyzes an anti cycloisomerization. In Acinetobacter baylyi (strain ATCC 33305 / BD413 / ADP1), this protein is 3-carboxy-cis,cis-muconate cycloisomerase (pcaB).